A 289-amino-acid polypeptide reads, in one-letter code: Dihydropteroate synthase (289 aa).

The region spanning 28 to 282 (TYVMGILNTT…DVEAMAQICK (255 aa)) is the Pterin-binding domain. Asn35 contacts Mg(2+). (7,8-dihydropterin-6-yl)methyl diphosphate contacts are provided by residues Thr75, Asp109, Asn128, Asp199, Lys235, and 270–272 (RVH).

It belongs to the DHPS family. Mg(2+) is required as a cofactor.

The enzyme catalyses (7,8-dihydropterin-6-yl)methyl diphosphate + 4-aminobenzoate = 7,8-dihydropteroate + diphosphate. It participates in cofactor biosynthesis; tetrahydrofolate biosynthesis; 7,8-dihydrofolate from 2-amino-4-hydroxy-6-hydroxymethyl-7,8-dihydropteridine diphosphate and 4-aminobenzoate: step 1/2. In terms of biological role, catalyzes the condensation of para-aminobenzoate (pABA) with 6-hydroxymethyl-7,8-dihydropterin diphosphate (DHPt-PP) to form 7,8-dihydropteroate (H2Pte), the immediate precursor of folate derivatives. The chain is Dihydropteroate synthase (folP) from Synechocystis sp. (strain ATCC 27184 / PCC 6803 / Kazusa).